The following is an 861-amino-acid chain: Leucine--tRNA ligase (861 aa).

The 'HIGH' region motif lies at 42 to 52; the sequence is PYPSGRLHMGH. Positions 619-623 match the 'KMSKS' region motif; sequence KMSKS. Lys-622 provides a ligand contact to ATP.

This sequence belongs to the class-I aminoacyl-tRNA synthetase family.

It is found in the cytoplasm. The enzyme catalyses tRNA(Leu) + L-leucine + ATP = L-leucyl-tRNA(Leu) + AMP + diphosphate. This chain is Leucine--tRNA ligase, found in Haemophilus influenzae (strain PittEE).